The primary structure comprises 336 residues: Probable deoxyhypusine synthase (336 aa).

Lys308 acts as the Nucleophile in catalysis.

Belongs to the deoxyhypusine synthase family. It depends on NAD(+) as a cofactor.

The catalysed reaction is [eIF5A protein]-L-lysine + spermidine = [eIF5A protein]-deoxyhypusine + propane-1,3-diamine. Its pathway is protein modification; eIF5A hypusination. Functionally, catalyzes the NAD-dependent oxidative cleavage of spermidine and the subsequent transfer of the butylamine moiety of spermidine to the epsilon-amino group of a specific lysine residue of the eIF-5A precursor protein to form the intermediate deoxyhypusine residue. This is Probable deoxyhypusine synthase from Pyrococcus furiosus (strain ATCC 43587 / DSM 3638 / JCM 8422 / Vc1).